Here is a 538-residue protein sequence, read N- to C-terminus: Phosphoenolpyruvate carboxykinase (ATP) (538 aa).

Substrate is bound by residues Arg-61, Tyr-195, and Lys-201. ATP-binding positions include Lys-201, His-220, and 236–244 (GLSGTGKTT). Residues Lys-201 and His-220 each contribute to the Mn(2+) site. A Mn(2+)-binding site is contributed by Asp-257. ATP-binding residues include Glu-285, Arg-323, and Thr-449. Arg-323 is a binding site for substrate.

It belongs to the phosphoenolpyruvate carboxykinase (ATP) family. Requires Mn(2+) as cofactor.

The protein localises to the cytoplasm. It carries out the reaction oxaloacetate + ATP = phosphoenolpyruvate + ADP + CO2. It functions in the pathway carbohydrate biosynthesis; gluconeogenesis. Involved in the gluconeogenesis. Catalyzes the conversion of oxaloacetate (OAA) to phosphoenolpyruvate (PEP) through direct phosphoryl transfer between the nucleoside triphosphate and OAA. The protein is Phosphoenolpyruvate carboxykinase (ATP) of Nitrobacter hamburgensis (strain DSM 10229 / NCIMB 13809 / X14).